The following is a 265-amino-acid chain: Orotidine 5'-phosphate decarboxylase (265 aa).

Substrate is bound by residues D37, 59–61 (KTH), 91–100 (DRKFADIGNT), Y217, and R235. Residue K93 is the Proton donor of the active site.

Belongs to the OMP decarboxylase family.

The catalysed reaction is orotidine 5'-phosphate + H(+) = UMP + CO2. The protein operates within pyrimidine metabolism; UMP biosynthesis via de novo pathway; UMP from orotate: step 2/2. This is Orotidine 5'-phosphate decarboxylase (URA3) from Candida glabrata (strain ATCC 2001 / BCRC 20586 / JCM 3761 / NBRC 0622 / NRRL Y-65 / CBS 138) (Yeast).